A 523-amino-acid chain; its full sequence is Glycerate kinase (523 aa).

Ser-60 is modified (phosphoserine).

Belongs to the glycerate kinase type-2 family. Widely expressed.

It is found in the cytoplasm. Its subcellular location is the mitochondrion. The catalysed reaction is (R)-glycerate + ATP = (2R)-3-phosphoglycerate + ADP + H(+). This chain is Glycerate kinase (GLYCTK), found in Homo sapiens (Human).